We begin with the raw amino-acid sequence, 391 residues long: Steroid 3-ketoacyl-CoA thiolase (391 aa).

Cys-93 (acyl-thioester intermediate) is an active-site residue. Residues Gln-151, 221-223 (RET), and Ser-246 each bind CoA. Catalysis depends on proton acceptor residues His-347 and Cys-377. Residue Gly-379 participates in substrate binding.

Belongs to the thiolase-like superfamily. Thiolase family. In terms of assembly, dimer of dimers.

It carries out the reaction an acyl-CoA + acetyl-CoA = a 3-oxoacyl-CoA + CoA. It catalyses the reaction 3-oxochol-4-en-22-oyl-CoA + acetyl-CoA = 3,22-dioxochol-4-en-24-oyl-CoA + CoA. It functions in the pathway steroid metabolism; cholesterol degradation. Functionally, involved in the beta-oxidation of the cholesterol side chain. It is important for utilization of cholesterol as a sole carbon source in vitro and for full virulence in the chronic stage of mouse lung infection. Catalyzes the thiolysis of 3,22-dioxochol-4-en-24-oyl-CoA to yield 3-oxo-4-pregnene-20-carboxyl-CoA (3-OPC-CoA) and acetyl-CoA. Also able to use acetoacetyl-CoA (AcAcCoA) as substrate. The protein is Steroid 3-ketoacyl-CoA thiolase (fadA5) of Mycobacterium tuberculosis (strain ATCC 25618 / H37Rv).